A 1187-amino-acid chain; its full sequence is MPVQAAQWTEFLSCPICYNEFDENVHKPISLGCSHTVCKTCLNKLHRKACPFDQTAINTDIDVLPVNFALLQLVGAQVPDHQSIKLSNLGENKHYEVAKKCVEDLALYLKPLSGGKGVASLNQSALSRPMQRKLVTLVNCQLVEEEGRVRAMRAARSLGERTVTELILQHQNPQQLSANLWAAVRARGCQFLGPAMQEEALKLVLLALEDGSALSRKVLVLFVVQRLEPRFPQASKTSIGHVVQLLYRASCFKVTKRDEDSSLMQLKEEFRSYEALRREHDAQIVHIAMEAGLRISPEQWSSLLYGDLAHKSHMQSIIDKLQSPESFAKSVQELTIVLQRTGDPANLNRLRPHLELLANIDPNPDAVSPTWEQLENAMVAVKTVVHGLVDFIQNYSRKGHETPQPQPNSKYKTSMCRDLRQQGGCPRGTNCTFAHSQEELEKYRLRNKKMSATVRTFPLLNKVGVNSTVTTTAGNVISVIGSTETTGKIVASTNGISNTESSVSQLIPRGTDSAVRTLETVKKVGKVGTNAQNAGPSAESVSENKIGSPPKTPVSNAAATSAGPSNFGTELNSLPPKSSPFLTRVPVYPQHSESIQYFQDPRTQIPFEVPQYPQTGYYPPPPTVPAGVTPCVPRFVRSSNVPESSLPPASMPYADHYSTFSPRDRMNSSPYQPPPPQQYGPVPPVPSGMYAPVYDSRRIWRPAMYQRDDIIRSNSLPPMDVMHSSVYQTSLRERYNSLDGYYSVACQPPNDPRTTVPLPREPCGHLKTSCEEQLRRKPDQWTQYHTQKTPVSSTLPVATQSPTPPSPLFSVDFRSDFSESVSGAKFEEDHLSHYSPWSCGTIGSCINAIDSEPKDVIANSNAVLMDLDSGDVKRRVHLFEAQRRTKEEDPIIPFSDGPIISKWGAISRSSRTGYHTTDPVQATASQGSATKPISVSDYVPYVNAVDSRWSSYGNDATSSAHYIERDRFIVTDLSGHRKHSSTGDLLSIELQQAKSNSLLLQREANALAMQQKWNSLDEGRHLTLNLLSKEIELRNGENDYTEDTVDTKPDRDIELELSALDTDEPDGQSEQIEEILDIQLGISSQNDQLLNGTAVENGHPAQQHQKDPGKPKRQSLGEDHVILEEQKPILPVTSCFSQPRPMSISSASCLPITTSVSVGNLILKTHVMSEDKNDFLKPIANGKMVNS.

Zn(2+) contacts are provided by cysteine 14, cysteine 17, cysteine 33, histidine 35, cysteine 38, cysteine 50, and aspartate 53. An RING-type; degenerate zinc finger spans residues 14-54; sequence CPICYNEFDENVHKPISLGCSHTVCKTCLNKLHRKACPFDQ. The HEPN-N stretch occupies residues 91–170; sequence ENKHYEVAKK…RTVTELILQH (80 aa). Positions 171–325 are ROQ; that stretch reads QNPQQLSANL…SIIDKLQSPE (155 aa). The tract at residues 326–396 is HEPN-C; it reads SFAKSVQELT…GLVDFIQNYS (71 aa). The C3H1-type zinc-finger motif lies at 410–438; the sequence is KYKTSMCRDLRQQGGCPRGTNCTFAHSQE. Disordered regions lie at residues 527 to 571 and 640 to 677; these read VGTN…GTEL and NVPE…PPPQ. Residues 529-545 show a composition bias toward polar residues; the sequence is TNAQNAGPSAESVSENK. A Phosphoserine modification is found at serine 548. Over residues 553 to 571 the composition is skewed to polar residues; it reads PVSNAAATSAGPSNFGTEL. Phosphoserine occurs at positions 806, 981, and 1115.

Interacts with EDC4. Interacts with CCR4-NOT deadenylase complex. Interacts with MAP3K5; the interaction is probably stimulus-dependent. Proteolytically cleaved by MALT1 in activated CD4(+) T cells; cleavage at Arg-509 is critical for promoting RC3H1 degradation in response to T-cell receptor (TCR) stimulation, and hence is necessary for prolonging the stability of a set of mRNAs controlling Th17 cell differentiation. In terms of tissue distribution, highest levels in lymph node and thymus and slightly lesser amounts in brain, lung, and spleen (at protein level). Very weak expression in heart, muscle, and kidney (at protein level). Expressed in CD4(+) helper T-cells (at protein level).

Its subcellular location is the cytoplasm. The protein resides in the P-body. The catalysed reaction is S-ubiquitinyl-[E2 ubiquitin-conjugating enzyme]-L-cysteine + [acceptor protein]-L-lysine = [E2 ubiquitin-conjugating enzyme]-L-cysteine + N(6)-ubiquitinyl-[acceptor protein]-L-lysine.. It participates in protein modification; protein ubiquitination. Binding to dsRNA, but not CDE RNA, crosstalks with the E3 ubiquitin ligase activity and may inhibit ubiquitination. Its function is as follows. Post-transcriptional repressor of mRNAs containing a conserved stem loop motif, called constitutive decay element (CDE), which is often located in the 3'-UTR, as in HMGXB3, ICOS, IER3, NFKBID, NFKBIZ, PPP1R10, TNF and in many more mRNAs. Binds to CDE and promotes mRNA deadenylation and degradation. This process does not involve miRNAs. In follicular helper T (Tfh) cells, represses of ICOS and TNFRSF4 expression, thus preventing spontaneous Tfh cell differentiation, germinal center B-cell differentiation in the absence of immunization and autoimmunity. In resting or LPS-stimulated macrophages, controls inflammation by suppressing TNF expression. Also recognizes CDE in its own mRNA and in that of paralogous RC3H1, possibly leading to feedback loop regulation. Inhibits cooperatively with ZC3H12A the differentiation of helper T cells Th17 in lungs. They repress target mRNA encoding the Th17 cell-promoting factors IL6, ICOS, REL, IRF4, NFKBID and NFKBIZ. The cooperation requires RNA-binding by RC3H1 and the nuclease activity of ZC3H12A. miRNA-binding protein that regulates microRNA homeostasis. Enhances DICER-mediated processing of pre-MIR146a but reduces mature MIR146a levels through an increase of 3' end uridylation. Both inhibits ICOS mRNA expression and they may act together to exert the suppression. Acts as a ubiquitin E3 ligase. Pairs with E2 enzymes UBE2B, UBE2D2, UBE2E2, UBE2E3, UBE2G2, UBE2K and UBE2Q2 and produces polyubiquitin chains. Shows the strongest activity when paired with UBE2N:UBE2V1 or UBE2N:UBE2V2 E2 complexes and generate both short and long polyubiquitin chains. Involved in the ubiquitination of MAP3K5. Able to interact with double-stranded RNA (dsRNA). The protein is Roquin-2 (Rc3h2) of Mus musculus (Mouse).